Reading from the N-terminus, the 391-residue chain is 3-ketoacyl-CoA thiolase (391 aa).

Catalysis depends on Cys95, which acts as the Acyl-thioester intermediate. Catalysis depends on proton acceptor residues His347 and Cys377.

This sequence belongs to the thiolase-like superfamily. Thiolase family. Heterotetramer of two alpha chains (FadB) and two beta chains (FadA).

It localises to the cytoplasm. It carries out the reaction an acyl-CoA + acetyl-CoA = a 3-oxoacyl-CoA + CoA. Its pathway is lipid metabolism; fatty acid beta-oxidation. Catalyzes the final step of fatty acid oxidation in which acetyl-CoA is released and the CoA ester of a fatty acid two carbons shorter is formed. The polypeptide is 3-ketoacyl-CoA thiolase (Pseudomonas putida (strain ATCC 700007 / DSM 6899 / JCM 31910 / BCRC 17059 / LMG 24140 / F1)).